We begin with the raw amino-acid sequence, 83 residues long: Heterin-1 (83 aa).

An N-terminal signal peptide occupies residues 1-22 (MNGKLLLVSLMVTMLVMQPAEA). Residues 66–83 (VAGQIPFDEFMDILHYRP) constitute a propeptide that is removed on maturation.

Belongs to the non-disulfide-bridged peptide (NDBP) superfamily. Long chain multifunctional peptide (group 2) family. In terms of tissue distribution, expressed by the venom gland.

It localises to the secreted. The protein localises to the target cell membrane. Its function is as follows. Amphipathic peptide with potent activities against both Gram-positive and Gram-negative bacteria. Is the most active against the two Gram-positive Bacillus megaterium and Micrococcus luteus (MIC=4.0 uM for both). It has relatively low hemolytic activity against human erythrocytes. This Heterometrus spinifer (Asia giant forest scorpion) protein is Heterin-1.